The following is a 158-amino-acid chain: Large ribosomal subunit protein bL19 (158 aa).

Residues 1–35 are disordered; the sequence is MTADSKDTSMSEDNTETATAIENSSAMVTDVTSKS. A compositionally biased stretch (polar residues) spans 16-35; it reads ETATAIENSSAMVTDVTSKS.

Belongs to the bacterial ribosomal protein bL19 family.

Its function is as follows. This protein is located at the 30S-50S ribosomal subunit interface and may play a role in the structure and function of the aminoacyl-tRNA binding site. The protein is Large ribosomal subunit protein bL19 of Prochlorococcus marinus (strain MIT 9313).